Here is a 111-residue protein sequence, read N- to C-terminus: uncharacterized protein (111 aa).

Transmembrane regions (helical) follow at residues 22–42, 48–68, and 75–95; these read ASLI…ANIT, LTPA…VSVL, and VLVT…PKIL.

It localises to the membrane. This is an uncharacterized protein from Saccharomyces cerevisiae (strain ATCC 204508 / S288c) (Baker's yeast).